The chain runs to 232 residues: Large ribosomal subunit protein uL1 (232 aa).

This sequence belongs to the universal ribosomal protein uL1 family. Part of the 50S ribosomal subunit.

Binds directly to 23S rRNA. The L1 stalk is quite mobile in the ribosome, and is involved in E site tRNA release. Functionally, protein L1 is also a translational repressor protein, it controls the translation of the L11 operon by binding to its mRNA. This Cutibacterium acnes (strain DSM 16379 / KPA171202) (Propionibacterium acnes) protein is Large ribosomal subunit protein uL1.